A 305-amino-acid polypeptide reads, in one-letter code: Homoserine O-acetyltransferase (305 aa).

The active-site Acyl-thioester intermediate is the cysteine 142. Lysine 163 and serine 192 together coordinate substrate. Histidine 235 functions as the Proton acceptor in the catalytic mechanism. The active site involves glutamate 237. Arginine 249 serves as a coordination point for substrate.

It belongs to the MetA family.

It localises to the cytoplasm. The catalysed reaction is L-homoserine + acetyl-CoA = O-acetyl-L-homoserine + CoA. It participates in amino-acid biosynthesis; L-methionine biosynthesis via de novo pathway; O-acetyl-L-homoserine from L-homoserine: step 1/1. Its function is as follows. Transfers an acetyl group from acetyl-CoA to L-homoserine, forming acetyl-L-homoserine. The chain is Homoserine O-acetyltransferase from Cereibacter sphaeroides (strain ATCC 17025 / ATH 2.4.3) (Rhodobacter sphaeroides).